Here is a 164-residue protein sequence, read N- to C-terminus: Transcriptional regulator MraZ (164 aa).

SpoVT-AbrB domains lie at 7-63 (REQH…EPAV) and 92-135 (LDQL…NPDR).

The protein belongs to the MraZ family. Forms oligomers.

The protein resides in the cytoplasm. It is found in the nucleoid. The protein is Transcriptional regulator MraZ of Chlorobaculum parvum (strain DSM 263 / NCIMB 8327) (Chlorobium vibrioforme subsp. thiosulfatophilum).